Here is a 355-residue protein sequence, read N- to C-terminus: MGQQVQHESRINVGEATHVSKAEMGANTMFATSRLNSNNKVGPELAYLSGVASSASDSSTAAPSPCYLCHKPAALHVFGLAGRYVFGSVKREAYLSQEGPRSGRTPNRIAESLPVRVVNDFGLRLRVVTNQGPIKPRPPRPIDAIVFASIETRNRLRGFDRSFCCSAPPETYVFLPRARETIVLRANIIKMSSEQQASAGQPVLCASGCGFYGNPATLDMCSVCYRQHCLLNGATMATGPSSSVAAASAATVATGAVTSDSCSVPSAEVNGAAFSSKNNPEPATVVEKKAPANRCASCKKKVGLLGFACRCGATYCGTHRYPEKHACGFDFKGASRDAIARANPLIKGEKLTNKI.

The A20-type zinc finger occupies 199–233 (AGQPVLCASGCGFYGNPATLDMCSVCYRQHCLLNG). The Zn(2+) site is built by Cys205, Cys209, Cys221, Cys224, Cys295, Cys298, Cys309, Cys311, Cys316, His319, His325, and Cys327. The AN1-type zinc finger occupies 289–335 (KAPANRCASCKKKVGLLGFACRCGATYCGTHRYPEKHACGFDFKGAS).

May be involved in environmental stress response. The chain is Zinc finger A20 and AN1 domain-containing stress-associated protein 3 (SAP3) from Oryza sativa subsp. japonica (Rice).